The chain runs to 320 residues: Nucleoporin Nup37 (320 aa).

WD repeat units follow at residues lysine 67–leucine 113, glycine 118–isoleucine 157, glycine 160–serine 200, and serine 203–aspartate 242.

The protein localises to the nucleus. It localises to the nuclear pore complex. As part of the nuclear pore complex (NPC), has a role in its assembly and function. Functionally, (Microbial infection) Required for optimal replication of E.chaffeensis. This is Nucleoporin Nup37 from Drosophila melanogaster (Fruit fly).